The chain runs to 207 residues: MFLSLLILLSYALGFVFCVVCLACGLYYFSELVEEHATVAKRWIKYTMWFVMGIIFLLGIFEDLDFTSLLFSFIGHCCYYTLLTEFPFVTLTGYKFILSVLSFIISHISWFIYFRNTENWYPFGEIIAIFTFCVWLIPLIFFISLAANDNSLPMANSYSSHSNSNIIGVDSEFTKKKSRISVLKSMFAWAKEKTSDITGQKSMKHYY.

4 helical membrane-spanning segments follow: residues 2–22 (FLSL…VVCL), 54–74 (IIFL…FSFI), 94–114 (YKFI…FIYF), and 126–146 (IIAI…ISLA).

This sequence belongs to the SVP26 family.

It is found in the membrane. In Dictyostelium discoideum (Social amoeba), this protein is Protein TEX261 homolog.